Reading from the N-terminus, the 254-residue chain is HTH-type transcriptional regulator GolR (254 aa).

One can recognise an HTH deoR-type domain in the interval 3 to 58; sequence PFERQNKIIHLLDQNNKITVPELSRILDVSISTIRNDLSALEESGMIKKVHGGAVL. The segment at residues 20–39 is a DNA-binding region (H-T-H motif); that stretch reads ITVPELSRILDVSISTIRND.

Involved in the glycerol metabolism. Repressor of the gol operon for glycerol metabolism. This chain is HTH-type transcriptional regulator GolR, found in Listeria innocua serovar 6a (strain ATCC BAA-680 / CLIP 11262).